Here is a 394-residue protein sequence, read N- to C-terminus: Probable ribosome production factor 1 (394 aa).

2 disordered regions span residues Met1 to Asn98 and Met116 to Gln152. Acidic residues-rich tracts occupy residues Gln15 to Val33 and Ala59 to Asp88. Residues Met116–Ala134 are compositionally biased toward basic residues. The region spanning Pro185–Asp369 is the Brix domain. The interval Val347–Gln364 is RNA-binding.

It is found in the nucleus. It localises to the nucleolus. In terms of biological role, may be required for ribosome biogenesis. The chain is Probable ribosome production factor 1 from Drosophila melanogaster (Fruit fly).